The primary structure comprises 316 residues: Ribose-phosphate pyrophosphokinase (316 aa).

ATP-binding positions include 39–41 (DGE) and 98–99 (RQ). The Mg(2+) site is built by His-133 and Asp-172. Lys-195 is an active-site residue. D-ribose 5-phosphate contacts are provided by residues Arg-197, Asp-221, and 225–229 (DTGGT).

Belongs to the ribose-phosphate pyrophosphokinase family. Class I subfamily. Homohexamer. It depends on Mg(2+) as a cofactor.

It is found in the cytoplasm. It carries out the reaction D-ribose 5-phosphate + ATP = 5-phospho-alpha-D-ribose 1-diphosphate + AMP + H(+). The protein operates within metabolic intermediate biosynthesis; 5-phospho-alpha-D-ribose 1-diphosphate biosynthesis; 5-phospho-alpha-D-ribose 1-diphosphate from D-ribose 5-phosphate (route I): step 1/1. Its function is as follows. Involved in the biosynthesis of the central metabolite phospho-alpha-D-ribosyl-1-pyrophosphate (PRPP) via the transfer of pyrophosphoryl group from ATP to 1-hydroxyl of ribose-5-phosphate (Rib-5-P). This chain is Ribose-phosphate pyrophosphokinase, found in Ralstonia nicotianae (strain ATCC BAA-1114 / GMI1000) (Ralstonia solanacearum).